The chain runs to 433 residues: Probable glycine dehydrogenase (decarboxylating) subunit 1 (433 aa).

This sequence belongs to the GcvP family. N-terminal subunit subfamily. In terms of assembly, the glycine cleavage system is composed of four proteins: P, T, L and H. In this organism, the P 'protein' is a heterodimer of two subunits.

It catalyses the reaction N(6)-[(R)-lipoyl]-L-lysyl-[glycine-cleavage complex H protein] + glycine + H(+) = N(6)-[(R)-S(8)-aminomethyldihydrolipoyl]-L-lysyl-[glycine-cleavage complex H protein] + CO2. Its function is as follows. The glycine cleavage system catalyzes the degradation of glycine. The P protein binds the alpha-amino group of glycine through its pyridoxal phosphate cofactor; CO(2) is released and the remaining methylamine moiety is then transferred to the lipoamide cofactor of the H protein. This is Probable glycine dehydrogenase (decarboxylating) subunit 1 from Thermoplasma acidophilum (strain ATCC 25905 / DSM 1728 / JCM 9062 / NBRC 15155 / AMRC-C165).